The sequence spans 919 residues: Transcriptional regulatory protein EDS1 (919 aa).

The disordered stretch occupies residues 1–54 (MSHHVPNLYGTPIRDPHERKRNSASMGEVNQSVSSRNCERGSEKGTKQRKKASR). A compositionally biased stretch (polar residues) spans 23–36 (SASMGEVNQSVSSR). The segment covering 37–46 (NCERGSEKGT) has biased composition (basic and acidic residues). A DNA-binding region (zn(2)-C6 fungal-type) is located at residues 56–85 (CDQCRRKRIKCRFDKHTGVCQGCLEVGEKC). Residues 297–338 (AGCPNKKLGTDGRSDKWDKNSTWKPVYRSSNPSHPSTEKNVS) form a disordered region. The segment covering 304–317 (LGTDGRSDKWDKNS) has biased composition (basic and acidic residues). Over residues 318 to 338 (TWKPVYRSSNPSHPSTEKNVS) the composition is skewed to polar residues.

As to quaternary structure, binds DNA in a sequence-specific manner.

It localises to the nucleus. The sequence is that of Transcriptional regulatory protein EDS1 (EDS1) from Saccharomyces cerevisiae (strain RM11-1a) (Baker's yeast).